The primary structure comprises 435 residues: MAVAELSPCYQTQIVKPPHLSWLSNNHKLNLLGLPKASRITEICCSLAPNQVQTPVAVPTGAQSIKPECYGVFCWTYDLKKEEETRSWKKMITIAISGAAGTISNHLLFKLASGVVFGPDQPIALKLLGSEKSFHALEGVAMELEDSLYPLLREVSIGIDPYEVFEDAEWALLIGAKPRGPGMERADLLDINGKIYAEQGKALNAVASPNVKVIVVGNPCNTNALICLKNPPNIPAKNFHSLTRLDENRAKCQLALKAGVFYDKVSNVTIWGNHSTTQVPDFVNAQIGGVPVKEVIKAQKWLEEEFTEKVRKRGGVLIQKWGRSSAASTAVSIVDAINPLITPTPPGDWFPSGVYTNGNPYGIAEDLIYSMPCRSKGDGDYELVKDVIFDDYLRKRIKTSEEELLAEKRCTAHLTGEGIAVCDLPAGDTMLPGEM.

A chloroplast-targeting transit peptide spans 1-45; sequence MAVAELSPCYQTQIVKPPHLSWLSNNHKLNLLGLPKASRITEICC. Cys-69 and Cys-74 form a disulfide bridge. 98–104 is a binding site for NADP(+); it reads GAAGTIS. Substrate-binding residues include Arg-179 and Arg-185. Residue Asn-192 coordinates NADP(+). Gln-199 provides a ligand contact to NAD(+). 216–218 contributes to the NADP(+) binding site; sequence VGN. Substrate-binding residues include Asn-218 and Arg-249. His-274 functions as the Proton acceptor in the catalytic mechanism. The cysteines at positions 410 and 422 are disulfide-linked.

Belongs to the LDH/MDH superfamily. MDH type 2 family. In terms of assembly, homodimer.

It is found in the plastid. Its subcellular location is the chloroplast. It catalyses the reaction (S)-malate + NADP(+) = oxaloacetate + NADPH + H(+). Chloroplast NADP-MDH is activated upon illumination. In order to be enzymatically active, disulfides bridges on the protein must be reduced by thioredoxin which receives electrons from ferredoxin and the electron transport system of photosynthesis. Its function is as follows. The chloroplastic, NADP-dependent form is essential for the photosynthesis C4 cycle, which allows plants to circumvent the problem of photorespiration. In C4 plants, NADP-MDH activity acts to convert oxaloacetate to malate in chloroplasts of mesophyll cells for transport to the bundle sheath cells. This is Malate dehydrogenase [NADP], chloroplastic (MDH) from Spinacia oleracea (Spinach).